A 1210-amino-acid polypeptide reads, in one-letter code: Disease resistance-like protein DSC2 (1210 aa).

One can recognise a TIR domain in the interval 59 to 223; sequence WTHQVFPSFR…KVAKDVSDVL (165 aa). The active site involves E134. One can recognise an NB-ARC domain in the interval 241–511; sequence ITRINSLLCL…CLFNGCQVNH (271 aa). LRR repeat units lie at residues 662–685, 686–709, 711–732, 756–780, 783–804, 805–828, 830–848, 849–873, and 940–970; these read AKFLVELIMRANKFEKLWEGIQPL, KNLKRMELGDARNLKEIPDLSNAT, LESLLLSFCTSLLEIPSSIRGT, ATSLEELNLSACSNLVELPCALPGD, MRSLSKLLLNGSSRLKTFPEIS, TNIQELNLSGTAIEEVPSSIRLWS, LDKLDMSRCKNLKMFPPVP, DGISVLNLSETEIEDIPPWVENLSQ, and LPELVYTSPVSLHFISNEFKTIPDCIKNLSQ.

The protein belongs to the disease resistance NB-LRR family. Interacts with DSC1.

It carries out the reaction NAD(+) + H2O = ADP-D-ribose + nicotinamide + H(+). TIR-NB-LRR receptor-like protein involved in plant defense. Acts as a trigger of hypersensitive response (HR). Functions as a guard of CAMTA3, a negative regulator of immunity, during pathogen infection. This is Disease resistance-like protein DSC2 from Arabidopsis thaliana (Mouse-ear cress).